Reading from the N-terminus, the 194-residue chain is Peptidyl-tRNA hydrolase (194 aa).

Tyr-17 is a binding site for tRNA. His-22 acts as the Proton acceptor in catalysis. Residues Phe-68, Asn-70, and Asn-116 each contribute to the tRNA site.

Belongs to the PTH family. In terms of assembly, monomer.

It localises to the cytoplasm. It carries out the reaction an N-acyl-L-alpha-aminoacyl-tRNA + H2O = an N-acyl-L-amino acid + a tRNA + H(+). Functionally, hydrolyzes ribosome-free peptidyl-tRNAs (with 1 or more amino acids incorporated), which drop off the ribosome during protein synthesis, or as a result of ribosome stalling. In terms of biological role, catalyzes the release of premature peptidyl moieties from peptidyl-tRNA molecules trapped in stalled 50S ribosomal subunits, and thus maintains levels of free tRNAs and 50S ribosomes. The protein is Peptidyl-tRNA hydrolase of Pasteurella multocida (strain Pm70).